Reading from the N-terminus, the 711-residue chain is Probable cyclic nucleotide-gated ion channel 10 (711 aa).

Topologically, residues 1 to 81 (MAFSHDNRVR…QDSFLQNWNK (81 aa)) are cytoplasmic. A helical transmembrane segment spans residues 82 to 102 (IFLFACVVALAIDPLFFYIPI). The Extracellular portion of the chain corresponds to 103–116 (VDSARHCLTLDSKL). Residues 117–137 (EIAASLLRTLIDAFYIIHIVF) traverse the membrane as a helical segment. The Cytoplasmic portion of the chain corresponds to 138 to 170 (QFRTAYIAPSSRVFGRGELVDDAKAIALKYLSS). The helical transmembrane segment at 171–191 (YFIIDLLSILPLPQIVVLAVI) threads the bilayer. Topologically, residues 192–204 (PSVNQPVSLLTKD) are extracellular. A helical transmembrane segment spans residues 205–225 (YLKFSIIAQYVPRILRMYPLY). Topologically, residues 226–243 (TEVTRTSGIVTETAWAGA) are cytoplasmic. A helical membrane pass occupies residues 244 to 264 (AWNLSLYMLASHVFGALWYLI). Topologically, residues 265-366 (SVEREDRCWQ…GQNLQTSKFV (102 aa)) are extracellular. Residues 367 to 387 (GEIIFAISICISGLVLFALLI) traverse the membrane as a helical segment. The Cytoplasmic segment spans residues 388–711 (GNMQKYLEST…DFTANHTTDP (324 aa)). A nucleoside 3',5'-cyclic phosphate contacts are provided by residues 473-603 (LFEI…TFRF) and Glu544. The calmodulin-binding stretch occupies residues 589 to 604 (FRRLHSKQLQHTFRFY). Positions 609–638 (RTWSVSFIQAAWRRYCRRKLAKSLRDEEDR) constitute an IQ domain. The disordered stretch occupies residues 689-711 (YTLPLLPQKPTEPDFTANHTTDP).

The protein belongs to the cyclic nucleotide-gated cation channel (TC 1.A.1.5) family. Homotetramer or heterotetramer.

It localises to the cell membrane. Its function is as follows. Probable cyclic nucleotide-gated ion channel. This is Probable cyclic nucleotide-gated ion channel 10 (CNGC10) from Arabidopsis thaliana (Mouse-ear cress).